The sequence spans 357 residues: Homoserine kinase (357 aa).

This sequence belongs to the GHMP kinase family. Homoserine kinase subfamily.

It carries out the reaction L-homoserine + ATP = O-phospho-L-homoserine + ADP + H(+). Its pathway is amino-acid biosynthesis; L-threonine biosynthesis; L-threonine from L-aspartate: step 4/5. In terms of biological role, commits homoserine to the threonine biosynthesis pathway by catalyzing its O-phosphorylation. This is Homoserine kinase from Cryptococcus neoformans var. grubii serotype A (strain H99 / ATCC 208821 / CBS 10515 / FGSC 9487) (Filobasidiella neoformans var. grubii).